The sequence spans 725 residues: Protein ALEX (725 aa).

7 disordered regions span residues 1–93, 177–226, 256–340, 396–481, 508–528, 584–624, and 638–675; these read MSPS…ARAQ, GAIA…PLTD, EPPL…PSQP, PILT…SPLL, PMQVHWSGEPGHSQLLPPLGH, LPGL…AASS, and ATRSGATQSATSSPEPSEAASVYPSVPDHDPSAPGRPR. Residues 41-51 show a composition bias toward basic residues; the sequence is HLRRKPCHSRH. Polar residues predominate over residues 260–276; the sequence is GSTTTPLSIWTAPQSQV. 2 stretches are compositionally biased toward basic and acidic residues: residues 297–307 and 314–326; these read QLSEKQPRWKE and RWKEKSPLRREGT. 2 stretches are compositionally biased toward pro residues: residues 423–442 and 459–473; these read PSQPPRQSLPPRPSLPPGQP and RSLPPGQPLSPPRSP. Composition is skewed to low complexity over residues 584–598 and 643–658; these read LPGLTSTSGAEAAAG and ATQSATSSPEPSEAAS.

The protein belongs to the ALEX family. Interacts with the N-terminal region of the XLas isoforms of guanine nucleotide-binding protein G(s) subunit alpha.

The protein localises to the cell membrane. It localises to the cell projection. The protein resides in the ruffle. May inhibit the adenylyl cyclase-stimulating activity of guanine nucleotide-binding protein G(s) subunit alpha which is produced from the same locus in a different open reading frame. The chain is Protein ALEX from Mus musculus (Mouse).